The sequence spans 346 residues: Heat-inducible transcription repressor HrcA (346 aa).

Belongs to the HrcA family.

In terms of biological role, negative regulator of class I heat shock genes (grpE-dnaK-dnaJ and groELS operons). Prevents heat-shock induction of these operons. The chain is Heat-inducible transcription repressor HrcA from Kineococcus radiotolerans (strain ATCC BAA-149 / DSM 14245 / SRS30216).